We begin with the raw amino-acid sequence, 291 residues long: ATP synthase gamma chain (291 aa).

Belongs to the ATPase gamma chain family. F-type ATPases have 2 components, CF(1) - the catalytic core - and CF(0) - the membrane proton channel. CF(1) has five subunits: alpha(3), beta(3), gamma(1), delta(1), epsilon(1). CF(0) has three main subunits: a, b and c.

The protein resides in the cell inner membrane. Produces ATP from ADP in the presence of a proton gradient across the membrane. The gamma chain is believed to be important in regulating ATPase activity and the flow of protons through the CF(0) complex. This is ATP synthase gamma chain from Pelagibacter ubique (strain HTCC1062).